Reading from the N-terminus, the 127-residue chain is MTKKAIIPAGTTKPIAPFVPGSMADGVLYVSGTLPFDKDNNVVHVGDATAQTRHVLETIKSVVETAGGTMDDVTFNMIMIRDWADYAKVNEVYAEYFAGEKPARYCIQCGLVKPEALIEIASIAHIG.

Belongs to the RutC family.

The catalysed reaction is (Z)-3-aminoacrylate + H2O + H(+) = 3-oxopropanoate + NH4(+). Its function is as follows. Involved in pyrimidine catabolism. Catalyzes the deamination of 3-aminoacrylate to malonic semialdehyde, a reaction that can also occur spontaneously. RutC may facilitate the reaction and modulate the metabolic fitness, rather than catalyzing essential functions. This is 3-aminoacrylate deaminase RutC from Pseudomonas savastanoi pv. phaseolicola (strain 1448A / Race 6) (Pseudomonas syringae pv. phaseolicola (strain 1448A / Race 6)).